We begin with the raw amino-acid sequence, 617 residues long: V-type proton ATPase catalytic subunit A (617 aa).

Residue 257-264 coordinates ATP; sequence GAFGCGKT.

It belongs to the ATPase alpha/beta chains family. As to quaternary structure, V-ATPase is a heteromultimeric enzyme composed of a peripheral catalytic V1 complex (components A to H) attached to an integral membrane V0 proton pore complex (components: a, c, c', c'', d, e, f and VOA1).

The protein resides in the vacuole membrane. It catalyses the reaction ATP + H2O + 4 H(+)(in) = ADP + phosphate + 5 H(+)(out). Functionally, catalytic subunit of the V1 complex of vacuolar(H+)-ATPase (V-ATPase), a multisubunit enzyme composed of a peripheral complex (V1) that hydrolyzes ATP and a membrane integral complex (V0) that translocates protons. V-ATPase is responsible for acidifying and maintaining the pH of intracellular compartments. The sequence is that of V-type proton ATPase catalytic subunit A (VMA1) from Eremothecium gossypii (strain ATCC 10895 / CBS 109.51 / FGSC 9923 / NRRL Y-1056) (Yeast).